The sequence spans 599 residues: Elongation factor 4 (599 aa).

The tr-type G domain maps to 5-187; sequence KNIRNFSIIA…QLVERIPAPE (183 aa). Residues 17–22 and 134–137 contribute to the GTP site; these read DHGKST and NKID.

The protein belongs to the TRAFAC class translation factor GTPase superfamily. Classic translation factor GTPase family. LepA subfamily.

The protein resides in the cell inner membrane. It carries out the reaction GTP + H2O = GDP + phosphate + H(+). Its function is as follows. Required for accurate and efficient protein synthesis under certain stress conditions. May act as a fidelity factor of the translation reaction, by catalyzing a one-codon backward translocation of tRNAs on improperly translocated ribosomes. Back-translocation proceeds from a post-translocation (POST) complex to a pre-translocation (PRE) complex, thus giving elongation factor G a second chance to translocate the tRNAs correctly. Binds to ribosomes in a GTP-dependent manner. The protein is Elongation factor 4 of Alcanivorax borkumensis (strain ATCC 700651 / DSM 11573 / NCIMB 13689 / SK2).